The primary structure comprises 485 residues: Amino acid permease 1 (485 aa).

Polar residues predominate over residues 1–15 (MKSFNTEGHNHSTAE). The disordered stretch occupies residues 1-35 (MKSFNTEGHNHSTAESGDAYTVSDPTKNVDEDGRE). Topologically, residues 1 to 40 (MKSFNTEGHNHSTAESGDAYTVSDPTKNVDEDGREKRTGT) are cytoplasmic. 2 consecutive transmembrane segments (helical) span residues 41 to 61 (WLTA…LSLA) and 62 to 82 (WAIA…FSFI). Topologically, residues 83–129 (TYFTSTMLADCYRAPDPVTGKRNYTYMDVVRSYLGGRKVQLCGVAQY) are cytoplasmic. The chain crosses the membrane as a helical span at residues 130–150 (GNLIGVTVGYTITASISLVAV). The Extracellular segment spans residues 151-166 (GKSNCFHDKGHTADCT). The chain crosses the membrane as a helical span at residues 167–187 (ISNYPYMAVFGIIQVILSQIP). At 188 to 194 (NFHKLSF) the chain is on the cytoplasmic side. Residues 195–215 (LSIMAAVMSFTYATIGIGLAI) traverse the membrane as a helical segment. The Extracellular segment spans residues 216–245 (ATVAGGKVGKTSMTGTAVGVDVTAAQKIWR). The chain crosses the membrane as a helical span at residues 246-266 (SFQAVGDIAFAYAYATVLIEI). Topologically, residues 267 to 285 (QDTLRSSPAENKAMKRASL) are cytoplasmic. Residues 286 to 306 (VGVSTTTFFYILCGCIGYAAF) traverse the membrane as a helical segment. The Extracellular portion of the chain corresponds to 307-318 (GNNAPGDFLTDF). A helical membrane pass occupies residues 319–339 (GFFEPFWLIDFANACIAVHLI). Over 340 to 394 (GAYQVFAQPIFQFVEKKCNRNYPDNKFITSEYSVNVPFLGKFNISLFRLVWRTAY) the chain is Cytoplasmic. 2 consecutive transmembrane segments (helical) span residues 395–415 (VVIT…LGLI) and 416–436 (GAAS…IAQT). The Cytoplasmic portion of the chain corresponds to 437–450 (KIKKYSARWIALKT). A helical membrane pass occupies residues 451 to 471 (MCYVCLIVSLLAAAGSIAGLI). The Extracellular segment spans residues 472-485 (SSVKTYKPFRTMHE).

This sequence belongs to the amino acid/polyamine transporter 2 family. Amino acid/auxin permease (AAAP) (TC 2.A.18.2) subfamily. In terms of tissue distribution, highly expressed in developing pods. Found in the endosperm and in the storage parenchyma and the outer epidermis cells of the developing embryo. Lower levels of expression in flowers, in the vascular system of the cotyledon and in the root epidermal cells, including root hairs and throughout the root tip.

The protein resides in the cell membrane. With respect to regulation, inhibited by carbonylcyanide m-chlorophenylhydrazone and diethylpyrocarbonate (DEPC). Its function is as follows. Amino acid-proton symporter. Stereospecific transporter with a broad specificity for histidine, glutamate and neutral amino acids. Reduced affinities for asparagine and valine. Involved in amino acid uptake from the apoplastic cavity into the embryo cells for storage protein accumulation and in root amino acid uptake. In Arabidopsis thaliana (Mouse-ear cress), this protein is Amino acid permease 1 (AAP1).